A 257-amino-acid polypeptide reads, in one-letter code: MKKTAFTLLLFIALTLTTSPLVNGSEKSEEINEKDLRKKSELQGTALGNLKQIYYYNEKAKTENKESHDQFLQHTILFKGFFTDHSWYNDLLVDFDSKDIVDKYKGKKVDLYGAYYGYQCAGGTPNKTACMYGGVTLHDNNRLTEEKKVPINLWLDGKQNTVPLETVKTNKKNVTVQELDLQARRYLQEKYNLYNSDVFDGKVQRGLIVFHTSTEPSVNYDLFGAQGQYSNTLLRIYRDNKTINSENMHIDIYLYTS.

The N-terminal stretch at 1-24 (MKKTAFTLLLFIALTLTTSPLVNG) is a signal peptide. Cys120 and Cys130 are oxidised to a cystine. Residues His211, His249, and Asp251 each contribute to the Zn(2+) site.

It belongs to the staphylococcal/streptococcal toxin family. In terms of assembly, monomer. Interacts with MHC class II molecules alpha/HLA-DRB1 and beta/HLA-DRA chains. The interaction with MHC-II molecules occurs at both zinc-dependent and zinc-independent sites. Interacts with T-cell receptor beta variable 7-9/TRBV7-9. Zn(2+) serves as cofactor.

It is found in the secreted. Staphylococcal enterotoxin that activates the host immune system by binding as unprocessed molecules to major histocompatibility (MHC) complex class II and T-cell receptor (TCR) molecules. In turn, waves of cellular activation, cytokine production, and migration into the lung tissue and airways occur via alphabeta T-cells. Also causes the intoxication staphylococcal food poisoning syndrome. The illness is characterized by high fever, hypotension, diarrhea, shock, and in some cases death. This is Enterotoxin type A (entA) from Staphylococcus aureus.